A 496-amino-acid chain; its full sequence is MSSQLNDPTPIPAQSSLSFTQGFLLGQLSVVLLIAAFIKFFIFGEAPPPPSRGLSHRSATHRRSNSIYSSTQHDGNTRTLREKPSNSNVLRPVPSSATNTRSILRKTYYTAIPTNPSSKHGRHRIHHSSHQPESLDWFNVLIAQTIAQYRQTAYLLKDSPTSSILSSLTAALNNPEKKPSFIDKITVTDISLGEEFPIFSNCRIIAVDDPNSDGGRLQALMDVDLSDDNLSIAIETQLLLNYPKPCSAILPVALSISVVRFSGTLCISLVPASTPPLDTPSHSPSPPTAQTTTTGRSKREDQTGGSHSRAGGSSEEPSGENPPKTSPKSNVAFSFLPDYRLDLSVRSLIGSRSRLQDVPKVAQLVEARVHAWFEERVVEPRVQVVGLPDLWPRMGRTGVRTGDDSETGSNAPRSSTAADASGPAHHEDSSREPEVLRFGSLLGTRPPFDLASRTSSFNVETGDLRSRSMTREESSGNLSDQFHMPGSLPGGGVTTT.

The Lumenal segment spans residues 1 to 22 (MSSQLNDPTPIPAQSSLSFTQG). The chain crosses the membrane as a helical span at residues 23 to 43 (FLLGQLSVVLLIAAFIKFFIF). Over 44-496 (GEAPPPPSRG…SLPGGGVTTT (453 aa)) the chain is Cytoplasmic. Disordered stretches follow at residues 50 to 96 (PSRG…VPSS), 276 to 331 (PLDT…KSNV), 395 to 433 (GRTG…SREP), and 449 to 496 (DLAS…VTTT). Positions 54–64 (LSHRSATHRRS) are enriched in basic residues. Polar residues predominate over residues 65-74 (NSIYSSTQHD). Residues 75–84 (GNTRTLREKP) show a composition bias toward basic and acidic residues. Polar residues predominate over residues 85–96 (SNSNVLRPVPSS). Positions 131–388 (QPESLDWFNV…EPRVQVVGLP (258 aa)) constitute an SMP-LTD domain. Over residues 276-287 (PLDTPSHSPSPP) the composition is skewed to pro residues. The span at 407–418 (TGSNAPRSSTAA) shows a compositional bias: polar residues. Composition is skewed to basic and acidic residues over residues 424–433 (AHHEDSSREP) and 462–474 (GDLR…REES).

This sequence belongs to the MMM1 family. Homodimer. Component of the ER-mitochondria encounter structure (ERMES) or MDM complex, composed of mmm1, mdm10, mdm12 and mdm34. A mmm1 homodimer associates with one molecule of mdm12 on each side in a pairwise head-to-tail manner, and the SMP-LTD domains of mmm1 and mdm12 generate a continuous hydrophobic tunnel for phospholipid trafficking.

The protein localises to the endoplasmic reticulum membrane. Functionally, component of the ERMES/MDM complex, which serves as a molecular tether to connect the endoplasmic reticulum (ER) and mitochondria. Components of this complex are involved in the control of mitochondrial shape and protein biogenesis, and function in nonvesicular lipid trafficking between the ER and mitochondria. The mdm12-mmm1 subcomplex functions in the major beta-barrel assembly pathway that is responsible for biogenesis of all outer membrane beta-barrel proteins, and acts in a late step after the SAM complex. The mdm10-mdm12-mmm1 subcomplex further acts in the TOM40-specific pathway after the action of the mdm12-mmm1 complex. Essential for establishing and maintaining the structure of mitochondria and maintenance of mtDNA nucleoids. The chain is Maintenance of mitochondrial morphology protein 1 from Neosartorya fischeri (strain ATCC 1020 / DSM 3700 / CBS 544.65 / FGSC A1164 / JCM 1740 / NRRL 181 / WB 181) (Aspergillus fischerianus).